A 212-amino-acid chain; its full sequence is Pyrrolidone-carboxylate peptidase (212 aa).

Active-site residues include Glu78, Cys141, and His165.

It belongs to the peptidase C15 family. As to quaternary structure, homotetramer.

It is found in the cytoplasm. The enzyme catalyses Release of an N-terminal pyroglutamyl group from a polypeptide, the second amino acid generally not being Pro.. Functionally, removes 5-oxoproline from various penultimate amino acid residues except L-proline. The protein is Pyrrolidone-carboxylate peptidase of Staphylococcus aureus (strain bovine RF122 / ET3-1).